The following is a 348-amino-acid chain: uncharacterized protein (348 aa).

6 WD repeats span residues 59-98 (GFQG…VVYS), 142-182 (GHTD…LIQT), 185-226 (DNLG…LLGT), 229-267 (QQPG…ELFS), 270-309 (GPSL…QVTT), and 312-347 (GHQG…SALA).

This is an uncharacterized protein from Synechocystis sp. (strain ATCC 27184 / PCC 6803 / Kazusa).